Consider the following 468-residue polypeptide: Probable xyloglucan galactosyltransferase GT13 (468 aa).

The Cytoplasmic segment spans residues 1–18 (MDKFNPKKEKTVKKRALK). Residues 19 to 35 (VLTEISPTPLFSMLFLL) traverse the membrane as a helical; Signal-anchor for type II membrane protein segment. Residues 36 to 468 (HISQIATYLS…RVSLFKMTRI (433 aa)) lie on the Lumenal side of the membrane. N-linked (GlcNAc...) asparagine glycosylation is found at asparagine 53, asparagine 116, asparagine 153, asparagine 240, and asparagine 412.

Belongs to the glycosyltransferase 47 family. Expressed in roots, hypocotyls, cotyledons, leaves, stems, petals and carpels.

The protein localises to the golgi apparatus membrane. Its function is as follows. Functions in xyloglucan synthesis by adding side chains to the xylosylated glucan backbone. Involved in the galactosylation of hemicellulose xyloglucan. The chain is Probable xyloglucan galactosyltransferase GT13 from Arabidopsis thaliana (Mouse-ear cress).